The sequence spans 158 residues: MTIFEGSFTNASTLKVGIVIARFNDLITNKILSGCLDCLKKHGLDTSELSNQVDIVWVPGSFELPIAAKTLMKKKSYDVVIALGAVIRGETSHYDVVISEASKGISQVSNENNVPIIFGVLTTDTLQQALERAGIKNNLGWNYALQAIEMGSLIKNLN.

5-amino-6-(D-ribitylamino)uracil-binding positions include phenylalanine 23, 61 to 63 (SFE), and 85 to 87 (AVI). 90–91 (ET) contacts (2S)-2-hydroxy-3-oxobutyl phosphate. The active-site Proton donor is histidine 93. Phenylalanine 118 contacts 5-amino-6-(D-ribitylamino)uracil. Residue arginine 132 participates in (2S)-2-hydroxy-3-oxobutyl phosphate binding.

This sequence belongs to the DMRL synthase family.

The catalysed reaction is (2S)-2-hydroxy-3-oxobutyl phosphate + 5-amino-6-(D-ribitylamino)uracil = 6,7-dimethyl-8-(1-D-ribityl)lumazine + phosphate + 2 H2O + H(+). The protein operates within cofactor biosynthesis; riboflavin biosynthesis; riboflavin from 2-hydroxy-3-oxobutyl phosphate and 5-amino-6-(D-ribitylamino)uracil: step 1/2. Catalyzes the formation of 6,7-dimethyl-8-ribityllumazine by condensation of 5-amino-6-(D-ribitylamino)uracil with 3,4-dihydroxy-2-butanone 4-phosphate. This is the penultimate step in the biosynthesis of riboflavin. This Prochlorococcus marinus (strain MIT 9215) protein is 6,7-dimethyl-8-ribityllumazine synthase.